A 383-amino-acid polypeptide reads, in one-letter code: ATP phosphoribosyltransferase regulatory subunit (383 aa).

It belongs to the class-II aminoacyl-tRNA synthetase family. HisZ subfamily. Heteromultimer composed of HisG and HisZ subunits.

It localises to the cytoplasm. Its pathway is amino-acid biosynthesis; L-histidine biosynthesis; L-histidine from 5-phospho-alpha-D-ribose 1-diphosphate: step 1/9. Functionally, required for the first step of histidine biosynthesis. May allow the feedback regulation of ATP phosphoribosyltransferase activity by histidine. The protein is ATP phosphoribosyltransferase regulatory subunit of Paraburkholderia phytofirmans (strain DSM 17436 / LMG 22146 / PsJN) (Burkholderia phytofirmans).